A 423-amino-acid polypeptide reads, in one-letter code: MLVAAAVAPRQRLCVAFSGGADSTTLLHLLARLRPRFGFDLCAAHVHHALSPNADAWLDFCARQCAALDVAFHPFREQVARDHPAGLEAAAREVRHAALSRVTCDWLVFGHHQDDQAETLLFRLLRGAGVRGAAAMAAIEPGFPGRLRPLLGVRRADIRAFAQAASLEWIEDESNADPRHARNFLRHHVFPLFGEAFPGAVPALARASGHFREADGLLGDLAALDYAACGGSPWLRDRLLMLSDERVRNLLRWRIRQMGCEAPARARLVEAVRQLRATHAPLYLPLGTAACCTYRDRLWLEPQRDGAPEQPLPWRQEPALCWGAGVVRFEPVTGAGIGRGALQRAMDVALVPRWPGLMLRQDSGRPLRSFKNLCQEAGIPAWLRPRLPVLRVDGEAAWIGEIGVAAEFRCGPGEAGLLLVWQR.

18–23 (SGGADS) is an ATP binding site.

Belongs to the tRNA(Ile)-lysidine synthase family.

Its subcellular location is the cytoplasm. The enzyme catalyses cytidine(34) in tRNA(Ile2) + L-lysine + ATP = lysidine(34) in tRNA(Ile2) + AMP + diphosphate + H(+). In terms of biological role, ligates lysine onto the cytidine present at position 34 of the AUA codon-specific tRNA(Ile) that contains the anticodon CAU, in an ATP-dependent manner. Cytidine is converted to lysidine, thus changing the amino acid specificity of the tRNA from methionine to isoleucine. This is tRNA(Ile)-lysidine synthase from Aromatoleum aromaticum (strain DSM 19018 / LMG 30748 / EbN1) (Azoarcus sp. (strain EbN1)).